The following is a 260-amino-acid chain: 5'-nucleotidase SurE (260 aa).

Residues Asp-19, Asp-20, Ser-51, and Asn-104 each coordinate a divalent metal cation.

Belongs to the SurE nucleotidase family. The cofactor is a divalent metal cation.

It is found in the cytoplasm. The catalysed reaction is a ribonucleoside 5'-phosphate + H2O = a ribonucleoside + phosphate. Nucleotidase that shows phosphatase activity on nucleoside 5'-monophosphates. This chain is 5'-nucleotidase SurE, found in Paramagnetospirillum magneticum (strain ATCC 700264 / AMB-1) (Magnetospirillum magneticum).